Consider the following 722-residue polypeptide: Probable carboxypeptidase X1 (722 aa).

The signal sequence occupies residues 1–20 (MWGLLLAVTAFAPSVGLGLG). Positions 30 to 54 (APGSTLAPHSSVAQPSTKANETSER) are disordered. Residues 36 to 49 (APHSSVAQPSTKAN) show a composition bias toward polar residues. 4 N-linked (GlcNAc...) asparagine glycosylation sites follow: Asn49, Asn200, Asn210, and Asn307. One can recognise an F5/8 type C domain in the interval 103-263 (PGCPPLGLES…PCLRAEILAC (161 aa)). Cys105 and Cys263 are disulfide-bonded. A Peptidase M14 domain is found at 287 to 610 (RHHNYKAMRK…DALLTYLEQV (324 aa)). 2 residues coordinate Zn(2+): His349 and Glu352. A glycan (N-linked (GlcNAc...) asparagine) is linked at Asn461. His487 provides a ligand contact to Zn(2+). Residue Glu580 is the Proton donor/acceptor of the active site.

The protein belongs to the peptidase M14 family. It depends on Zn(2+) as a cofactor. In terms of tissue distribution, strongly expressed in testis and spleen. Moderately expressed in salivary gland, brain, heart, lung, and kidney. Extremely low expression in liver and muscle. No expression in eye, adrenal, and white adipose tissues.

It is found in the secreted. In terms of biological role, may be involved in cell-cell interactions. No carboxypeptidase activity was found yet. The chain is Probable carboxypeptidase X1 (Cpxm1) from Mus musculus (Mouse).